The primary structure comprises 198 residues: MHYPEPISKLIDSFMKLPGIGPKTAQRLAFHTLDMKEDDVVKFAKALVDVKRELTYCSVCGHITENDPCYICEDKQRDRSVICVVEDDKDVIAMEKMREYKGLYHVLHGSISPMDGIGPEDINIPALVERLKNDEVKELILAMNPNLEGESTAMYISRLVKPIGIKVTRLAQGLSVGGDLEYADEVTLSKAIAGRTEM.

The C4-type zinc finger occupies 57-72 (CSVCGHITENDPCYIC). The 96-residue stretch at 80 to 175 (SVICVVEDDK…KVTRLAQGLS (96 aa)) folds into the Toprim domain.

The protein belongs to the RecR family.

Functionally, may play a role in DNA repair. It seems to be involved in an RecBC-independent recombinational process of DNA repair. It may act with RecF and RecO. The protein is Recombination protein RecR of Staphylococcus epidermidis (strain ATCC 35984 / DSM 28319 / BCRC 17069 / CCUG 31568 / BM 3577 / RP62A).